The following is a 313-amino-acid chain: tRNA-cytidine(32) 2-sulfurtransferase (313 aa).

The PP-loop motif motif lies at Ser47–Ser52. Residues Cys122, Cys125, and Cys213 each contribute to the [4Fe-4S] cluster site. A disordered region spans residues Pro288–Lys313. The span at Thr299–Lys313 shows a compositional bias: basic and acidic residues.

Belongs to the TtcA family. As to quaternary structure, homodimer. The cofactor is Mg(2+). [4Fe-4S] cluster serves as cofactor.

The protein localises to the cytoplasm. It catalyses the reaction cytidine(32) in tRNA + S-sulfanyl-L-cysteinyl-[cysteine desulfurase] + AH2 + ATP = 2-thiocytidine(32) in tRNA + L-cysteinyl-[cysteine desulfurase] + A + AMP + diphosphate + H(+). It functions in the pathway tRNA modification. Its function is as follows. Catalyzes the ATP-dependent 2-thiolation of cytidine in position 32 of tRNA, to form 2-thiocytidine (s(2)C32). The sulfur atoms are provided by the cysteine/cysteine desulfurase (IscS) system. The protein is tRNA-cytidine(32) 2-sulfurtransferase of Yersinia pseudotuberculosis serotype O:1b (strain IP 31758).